The chain runs to 502 residues: Xylan O-acetyltransferase 13 (502 aa).

At 1 to 53 (MWSALFSHLREVHKRSGVKEEKLIMKSPPAAGEAGCHKPQATATNKMTVLQSP) the chain is on the cytoplasmic side. A helical; Signal-anchor for type II membrane protein transmembrane segment spans residues 54-76 (LGLRTILTSLVAFFIVVSSVSLL). Over 77-502 (FDRGQDAQAQ…EFLYAYIMHK (426 aa)) the chain is Lumenal. Disulfide bonds link C152-C203, C174-C239, C183-C483, and C399-C479. 4 N-linked (GlcNAc...) asparagine glycosylation sites follow: N153, N163, N189, and N209. The GDS motif signature appears at 226 to 228 (GDS). S228 functions as the Nucleophile in the catalytic mechanism. N-linked (GlcNAc...) asparagine glycans are attached at residues N255, N267, N372, N401, and N442. The Proton donor role is filled by D478. The DXXH motif motif lies at 478–481 (DCTH). H481 functions as the Proton acceptor in the catalytic mechanism.

This sequence belongs to the PC-esterase family. TBL subfamily.

Its subcellular location is the golgi apparatus membrane. Functionally, xylan acetyltransferase required for 2-O- and 3-O-monoacetylation of xylosyl residues in xylan. Catalyzes the 2-O-acetylation of xylan, followed by nonenzymatic acetyl migration to the O-3 position, resulting in products that are monoacetylated at both O-2 and O-3 positions. This chain is Xylan O-acetyltransferase 13, found in Oryza sativa subsp. japonica (Rice).